Here is a 261-residue protein sequence, read N- to C-terminus: tRNA(His) guanylyltransferase (261 aa).

Positions 29, 30, and 76 each coordinate Mg(2+). GTP contacts are provided by residues 29–34 and 75–76; these read DGKGFH and SD.

The protein belongs to the tRNA(His) guanylyltransferase family. Requires Mg(2+) as cofactor.

It catalyses the reaction a 5'-end ribonucleotide-tRNA(His) + GTP + ATP + H2O = a 5'-end phospho-guanosine-ribonucleotide-tRNA(His) + AMP + 2 diphosphate + H(+). Functionally, adds a GMP to the 5'-end of tRNA(His) after transcription and RNase P cleavage. In Schizosaccharomyces pombe (strain 972 / ATCC 24843) (Fission yeast), this protein is tRNA(His) guanylyltransferase (thg1).